The primary structure comprises 199 residues: Phycocyanobilin lyase CpcT (199 aa).

It belongs to the CpcT/CpeT biliprotein lyase family.

Its function is as follows. Catalyzes the site-selective attachment of phycocyanobilin (PCB) to 'Cys-154' of C-phycocyanin subunit beta (CpcB) and to 'Cys-153' of phycoerythrocyanin subunit beta (PecB). Does not have chromophore lyase activity for ApcA1, ApcA2, ApcB, ApcD, ApcF or PecA. This Nostoc sp. (strain PCC 7120 / SAG 25.82 / UTEX 2576) protein is Phycocyanobilin lyase CpcT (cpcT1).